The primary structure comprises 313 residues: MSQEFAHLSVLLEETVGGLNIKDDGIYIDGTFGRGGHSRQVLQRLGENGRLIAIDRDPQAIEAAKQFADDPRFQIVHGGFGQLADYVEELGLVGKIDGVLLDLGVSSPQLDDAERGFSFLRDGPLDMRMDNSQGETAAQWLARAEIEDMAWVFKTYGEEKNARHIARCIAADRDKTPFLRTKDLADLIARITKNKERNKHPATRVFQAIRIYINSELDQIDQALEGALTVLAPQGRLSIISFHSLEDRIVKRFIRRHSQGESVPHGLPITEDQINKSRKLRAIGKAIMPSDEEIERNARARSSVLRIAERLDY.

S-adenosyl-L-methionine contacts are provided by residues 35–37 (GGH), aspartate 55, phenylalanine 80, aspartate 102, and glutamine 109.

It belongs to the methyltransferase superfamily. RsmH family.

It localises to the cytoplasm. The catalysed reaction is cytidine(1402) in 16S rRNA + S-adenosyl-L-methionine = N(4)-methylcytidine(1402) in 16S rRNA + S-adenosyl-L-homocysteine + H(+). Its function is as follows. Specifically methylates the N4 position of cytidine in position 1402 (C1402) of 16S rRNA. The chain is Ribosomal RNA small subunit methyltransferase H from Shewanella sp. (strain MR-4).